Consider the following 195-residue polypeptide: UPF0316 protein Pcar_2434 (195 aa).

Transmembrane regions (helical) follow at residues 13 to 33 (LFLL…IGTL), 45 to 65 (WAGV…SQVM), and 71 to 91 (VWTY…GVLI).

Belongs to the UPF0316 family.

It localises to the cell membrane. The chain is UPF0316 protein Pcar_2434 from Syntrophotalea carbinolica (strain DSM 2380 / NBRC 103641 / GraBd1) (Pelobacter carbinolicus).